The sequence spans 704 residues: Elongation factor G (704 aa).

A tr-type G domain is found at 8–290 (EKYRNIGICA…GVVRYLPAPN (283 aa)). Residues 17-24 (AHVDAGKT), 88-92 (DTPGH), and 142-145 (NKMD) contribute to the GTP site.

It belongs to the TRAFAC class translation factor GTPase superfamily. Classic translation factor GTPase family. EF-G/EF-2 subfamily.

The protein localises to the cytoplasm. Catalyzes the GTP-dependent ribosomal translocation step during translation elongation. During this step, the ribosome changes from the pre-translocational (PRE) to the post-translocational (POST) state as the newly formed A-site-bound peptidyl-tRNA and P-site-bound deacylated tRNA move to the P and E sites, respectively. Catalyzes the coordinated movement of the two tRNA molecules, the mRNA and conformational changes in the ribosome. This is Elongation factor G from Francisella tularensis subsp. holarctica (strain FTNF002-00 / FTA).